Here is a 663-residue protein sequence, read N- to C-terminus: Zeaxanthin epoxidase, chloroplastic (663 aa).

The N-terminal 50 residues, 1–50 (MYSTVFYTSVHPSTSAFSRKQLPLLISKDFPTELYHSLPCSRSLENGQIK), are a transit peptide targeting the chloroplast. FAD is bound by residues 81-109 (KVLVAGGGIGGLVFALAAKKRGFDVLVFE) and 359-372 (TFSWGKGRVTLLGD). Residues 547–611 (LVLSRDENMP…HGTWITDNEG (65 aa)) enclose the FHA domain.

It depends on FAD as a cofactor. As to expression, higher expression in leaves than in roots.

It is found in the plastid. Its subcellular location is the chloroplast membrane. It localises to the chloroplast thylakoid membrane. It catalyses the reaction all-trans-zeaxanthin + 4 reduced [2Fe-2S]-[ferredoxin] + 2 O2 + 4 H(+) = all-trans-violaxanthin + 4 oxidized [2Fe-2S]-[ferredoxin] + 2 H2O. It participates in plant hormone biosynthesis; abscisate biosynthesis. Functionally, converts zeaxanthin into antheraxanthin and subsequently violaxanthin. Involved in the epoxidation of zeaxanthin. Plays an important role in resistance to stresses, seed development and dormancy. This is Zeaxanthin epoxidase, chloroplastic (ABA2) from Nicotiana plumbaginifolia (Leadwort-leaved tobacco).